We begin with the raw amino-acid sequence, 397 residues long: Probable peptidoglycan glycosyltransferase FtsW (397 aa).

At 1-30 (MYGLEMLEKIKLEYDKWACLTPKNSLYDRT) the chain is on the cytoplasmic side. Residues 31 to 51 (LVWLFLSLLMIGFIMVTSASI) form a helical membrane-spanning segment. Over 52 to 61 (PVSTRLNNDP) the chain is Periplasmic. The chain crosses the membrane as a helical span at residues 62-82 (FHFAIRDSIYLACSLLAFAFV). Residues 83 to 94 (VKIPMRNWEKYN) lie on the Cytoplasmic side of the membrane. Residues 95-115 (VPLFLLSLLFLASVLIFGRSV) form a helical membrane-spanning segment. Topologically, residues 116 to 126 (NGSIRWIQLGP) are periplasmic. Residues 127–146 (INFQPAELSKLAIICYFSSF) form a helical membrane-spanning segment. At 147–158 (YVRKYDEMRNRS) the chain is on the cytoplasmic side. The next 2 membrane-spanning stretches (helical) occupy residues 159 to 179 (ASVI…LLQP) and 180 to 200 (DLGS…IMGA). K201 is a topological domain (cytoplasmic). The chain crosses the membrane as a helical span at residues 202–222 (VMQFLLLIVTASVSFILLVLT). Residues 223-280 (SEYRLKRVTSFLDPFADAYGDGFQLSNAQMAFGQGQLWGQGLGNSVQKLEYLPEAHTD) lie on the Periplasmic side of the membrane. A helical transmembrane segment spans residues 281 to 301 (FVMAVVAEEFGFIGIIFMVVL). At 302–325 (LLCLSFRAIKISRDALKLEARFRG) the chain is on the cytoplasmic side. The helical transmembrane segment at 326–346 (FFAFGVAIWVFLQGSVNLGVA) threads the bilayer. At 347–356 (SGALPTKGLT) the chain is on the periplasmic side. A helical transmembrane segment spans residues 357–377 (FPLVSYGGSSLVIMSVAIAIL). Over 378-397 (LRIDYENRLTRVGHAQIKEP) the chain is Cytoplasmic.

It belongs to the SEDS family. FtsW subfamily.

It is found in the cell inner membrane. The enzyme catalyses [GlcNAc-(1-&gt;4)-Mur2Ac(oyl-L-Ala-gamma-D-Glu-L-Lys-D-Ala-D-Ala)](n)-di-trans,octa-cis-undecaprenyl diphosphate + beta-D-GlcNAc-(1-&gt;4)-Mur2Ac(oyl-L-Ala-gamma-D-Glu-L-Lys-D-Ala-D-Ala)-di-trans,octa-cis-undecaprenyl diphosphate = [GlcNAc-(1-&gt;4)-Mur2Ac(oyl-L-Ala-gamma-D-Glu-L-Lys-D-Ala-D-Ala)](n+1)-di-trans,octa-cis-undecaprenyl diphosphate + di-trans,octa-cis-undecaprenyl diphosphate + H(+). It functions in the pathway cell wall biogenesis; peptidoglycan biosynthesis. Peptidoglycan polymerase that is essential for cell division. This is Probable peptidoglycan glycosyltransferase FtsW from Haemophilus ducreyi (strain 35000HP / ATCC 700724).